We begin with the raw amino-acid sequence, 364 residues long: Lipoyl synthase, chloroplastic (364 aa).

The N-terminal 70 residues, 1–70, are a transit peptide targeting the chloroplast; it reads MEQTLFNPSI…PNVKKPEWLR (70 aa). The span at 32–52 shows a compositional bias: low complexity; sequence STNSPSSNTKTTTVTVPSKKT. The tract at residues 32–64 is disordered; it reads STNSPSSNTKTTTVTVPSKKTMGPYTGRDPNVK. Residues Cys95, Cys100, Cys106, Cys126, Cys130, Cys133, and Ser341 each coordinate [4Fe-4S] cluster. A Radical SAM core domain is found at 109–330; the sequence is GGGDGIATAT…KEYGESIGFR (222 aa).

It belongs to the radical SAM superfamily. Lipoyl synthase family. [4Fe-4S] cluster serves as cofactor.

It localises to the plastid. The protein resides in the chloroplast. The catalysed reaction is [[Fe-S] cluster scaffold protein carrying a second [4Fe-4S](2+) cluster] + N(6)-octanoyl-L-lysyl-[protein] + 2 oxidized [2Fe-2S]-[ferredoxin] + 2 S-adenosyl-L-methionine + 4 H(+) = [[Fe-S] cluster scaffold protein] + N(6)-[(R)-dihydrolipoyl]-L-lysyl-[protein] + 4 Fe(3+) + 2 hydrogen sulfide + 2 5'-deoxyadenosine + 2 L-methionine + 2 reduced [2Fe-2S]-[ferredoxin]. It participates in protein modification; protein lipoylation via endogenous pathway; protein N(6)-(lipoyl)lysine from octanoyl-[acyl-carrier-protein]: step 2/2. Its function is as follows. Catalyzes the radical-mediated insertion of two sulfur atoms into the C-6 and C-8 positions of the octanoyl moiety bound to the lipoyl domains of lipoate-dependent enzymes, thereby converting the octanoylated domains into lipoylated derivatives. The sequence is that of Lipoyl synthase, chloroplastic from Ricinus communis (Castor bean).